A 429-amino-acid polypeptide reads, in one-letter code: Divergent protein kinase domain 2A (429 aa).

The first 34 residues, 1-34 (MLRLASLKFGRLFRYAKVLFAASLLVVMLLNTHS), serve as a signal peptide directing secretion.

Belongs to the DIPK family.

The protein localises to the cytoplasmic vesicle. It is found in the COPI-coated vesicle. The protein resides in the golgi apparatus. It localises to the secreted. In terms of biological role, may play a role in cardiomyocyte proliferation through paracrine signaling and activation of the PPI3K-AKT-CDK7 signaling cascade. The sequence is that of Divergent protein kinase domain 2A (dipk2a) from Xenopus tropicalis (Western clawed frog).